Here is a 136-residue protein sequence, read N- to C-terminus: Large ribosomal subunit protein bL17 (136 aa).

The protein belongs to the bacterial ribosomal protein bL17 family. Part of the 50S ribosomal subunit. Contacts protein L32.

This is Large ribosomal subunit protein bL17 from Akkermansia muciniphila (strain ATCC BAA-835 / DSM 22959 / JCM 33894 / BCRC 81048 / CCUG 64013 / CIP 107961 / Muc).